The following is a 181-amino-acid chain: Protein Syd (181 aa).

This sequence belongs to the Syd family.

It is found in the cell inner membrane. In terms of biological role, interacts with the SecY protein in vivo. May bind preferentially to an uncomplexed state of SecY, thus functioning either as a chelating agent for excess SecY in the cell or as a regulatory factor that negatively controls the translocase function. This is Protein Syd from Klebsiella pneumoniae (strain 342).